Here is a 38-residue protein sequence, read N- to C-terminus: Large ribosomal subunit protein bL36 (38 aa).

This sequence belongs to the bacterial ribosomal protein bL36 family.

The polypeptide is Large ribosomal subunit protein bL36 (Karelsulcia muelleri (strain GWSS) (Sulcia muelleri)).